The chain runs to 425 residues: Putative chloroquine resistance transporter (425 aa).

Over 1-56 (MTGIKKGKNKKKNMKNDDRYKELDSLITNGSEIGNNSGRSCVKRFFKIIGNEMKNN) the chain is Cytoplasmic. A helical transmembrane segment spans residues 57–77 (VYVYLLSILYLCVCVMNKVFA). Residues 78–88 (KRTLNKMGNYS) are Vacuolar-facing. The N-linked (GlcNAc...) asparagine glycan is linked to Asn86. The chain crosses the membrane as a helical span at residues 89-109 (FVTSETHNIICIIVFQLLYFI). At 110–126 (YRKTSSSSVYKNESQKN) the chain is on the cytoplasmic side. Residues 127–147 (FGWQFFLISLLDASTVIISMI) traverse the membrane as a helical segment. Residues 148–157 (GLTRTTGNIQ) lie on the Vacuolar side of the membrane. The chain crosses the membrane as a helical span at residues 158–178 (SFIMQLIIPVNMYFWFMFLGY). The Cytoplasmic portion of the chain corresponds to 179 to 181 (RYH). Residues 182-202 (LFNYLGAFIILITIAVVETFL) form a helical membrane-spanning segment. Over 203-210 (SFETQGEN) the chain is Vacuolar. The chain crosses the membrane as a helical span at residues 211–231 (SIIFNLIMISAFNTLSFSNMT). The Cytoplasmic segment spans residues 232-249 (REVVFKKHKINILRLNAM). The chain crosses the membrane as a helical span at residues 250–270 (VVLFQFFTSLLVLPVYNIPFL). Residues 271–318 (KEIYMPFSEMSTNINNGLRCLFYGENTIVENCGVGMVKMCDNCEGAWK) are Vacuolar-facing. 2 disulfides stabilise this stretch: Cys290/Cys313 and Cys302/Cys310. Residues 319-339 (TFITFSFFNICDNLLACYIID) form a helical membrane-spanning segment. The Cytoplasmic portion of the chain corresponds to 340 to 347 (KFSTMTYT). Residues 348-368 (IVSCIQGPAITIAYYFKFLAG) traverse the membrane as a helical segment. Topologically, residues 369–378 (DAVRKPRILD) are vacuolar. A helical transmembrane segment spans residues 379-399 (FLTLFGYLFGTIIYRIGNIIL). Residues 400–425 (EKKQVIKSQNSNDSEAELTSIETSRA) are Cytoplasmic-facing.

It belongs to the CRT-like transporter family.

The protein resides in the vacuole membrane. Nutrient transporter. Involved in maintaining the osmotic homeostasis of the digestive vacuole. This Plasmodium berghei protein is Putative chloroquine resistance transporter.